A 328-amino-acid polypeptide reads, in one-letter code: Peroxidase 59 (328 aa).

An N-terminal signal peptide occupies residues 1–28; that stretch reads MKTQTKVMGGHVLLTVFTLCMLCSGVRA. Position 29 is a pyrrolidone carboxylic acid (Gln-29). 4 cysteine pairs are disulfide-bonded: Cys-39–Cys-116, Cys-72–Cys-77, Cys-122–Cys-323, and Cys-200–Cys-232. Catalysis depends on His-70, which acts as the Proton acceptor. Asp-71, Val-74, Gly-76, Asp-78, and Ser-80 together coordinate Ca(2+). Substrate is bound at residue Pro-163. A glycan (N-linked (GlcNAc...) asparagine) is linked at Asn-182. His-193 is a heme b binding site. Thr-194 contributes to the Ca(2+) binding site. 2 N-linked (GlcNAc...) asparagine glycosylation sites follow: Asn-209 and Asn-239. Residues Asp-245, Thr-248, Thr-251, and Asp-253 each contribute to the Ca(2+) site. N-linked (GlcNAc...) asparagine glycosylation is found at Asn-281 and Asn-310.

It belongs to the peroxidase family. Classical plant (class III) peroxidase subfamily. Requires heme b as cofactor. It depends on Ca(2+) as a cofactor. Slightly expressed in roots.

The protein localises to the secreted. It catalyses the reaction 2 a phenolic donor + H2O2 = 2 a phenolic radical donor + 2 H2O. Functionally, removal of H(2)O(2), oxidation of toxic reductants, biosynthesis and degradation of lignin, suberization, auxin catabolism, response to environmental stresses such as wounding, pathogen attack and oxidative stress. These functions might be dependent on each isozyme/isoform in each plant tissue. In Arabidopsis thaliana (Mouse-ear cress), this protein is Peroxidase 59 (PER59).